The primary structure comprises 76 residues: Acyl carrier protein (76 aa).

The 74-residue stretch at 1-74 folds into the Carrier domain; it reads MFDKLKEIIA…DVVEYITEHT (74 aa). Ser34 bears the O-(pantetheine 4'-phosphoryl)serine mark.

The protein belongs to the acyl carrier protein (ACP) family. Post-translationally, 4'-phosphopantetheine is transferred from CoA to a specific serine of apo-ACP by AcpS. This modification is essential for activity because fatty acids are bound in thioester linkage to the sulfhydryl of the prosthetic group.

Its subcellular location is the cytoplasm. Its pathway is lipid metabolism; fatty acid biosynthesis. Its function is as follows. Carrier of the growing fatty acid chain in fatty acid biosynthesis. This is Acyl carrier protein from Clostridium perfringens (strain ATCC 13124 / DSM 756 / JCM 1290 / NCIMB 6125 / NCTC 8237 / Type A).